The primary structure comprises 89 residues: Small ribosomal subunit protein uS19 (89 aa).

The protein belongs to the universal ribosomal protein uS19 family.

Functionally, protein S19 forms a complex with S13 that binds strongly to the 16S ribosomal RNA. This chain is Small ribosomal subunit protein uS19, found in Ruthia magnifica subsp. Calyptogena magnifica.